The sequence spans 317 residues: Melanocyte-stimulating hormone receptor (317 aa).

At 1-37 (MPMQGAQRKLLGSLNSTPTATSNLGLAANHTGAPCLE) the chain is on the extracellular side. Asn-29 carries an N-linked (GlcNAc...) asparagine glycan. The chain crosses the membrane as a helical span at residues 38–63 (VSIPDGLFLSLGLVSLVENVLVVAAV). Residues 64 to 72 (AKNRNLHSS) are Cytoplasmic-facing. Residues 73 to 93 (MYCFICCLALSDLLVSGSNML) traverse the membrane as a helical segment. At 94–118 (ETAVILLLETGALATRTSVVQQLHN) the chain is on the extracellular side. Residues 119–140 (TINVLTCSSMLCSLCFLGAIAV) traverse the membrane as a helical segment. Topologically, residues 141–163 (DRYISIFYALRYHSIMTLPRAQR) are cytoplasmic. A helical transmembrane segment spans residues 164–183 (AIAAIWVASVLSSTLFITYY). Topologically, residues 184–191 (DHAAVLLC) are extracellular. Residues 192–211 (LVVFFLAMLVLMAVLYVHML) form a helical membrane-spanning segment. The Cytoplasmic portion of the chain corresponds to 212 to 240 (ARACQHAHGIIRLHKRQTPAHQGFGLRGA). The chain crosses the membrane as a helical span at residues 241–266 (ATLTILLGIFFLCWGPFFLHLTLVVF). Topologically, residues 267–279 (CPQHLTCSCIFKN) are extracellular. Residues 280–300 (FKVFLTLIICNTIIDPLIYAF) traverse the membrane as a helical segment. Topologically, residues 301 to 317 (RSQELRRTLKEVLLCSW) are cytoplasmic. A lipid anchor (S-palmitoyl cysteine) is attached at Cys-315.

This sequence belongs to the G-protein coupled receptor 1 family. In terms of assembly, interacts with MGRN1, but does not undergo MGRN1-mediated ubiquitination; this interaction competes with GNAS-binding and thus inhibits agonist-induced cAMP production. Interacts with OPN3; the interaction results in a decrease in MC1R-mediated cAMP signaling and ultimately a decrease in melanin production in melanocytes.

Its subcellular location is the cell membrane. Functionally, receptor for MSH (alpha, beta and gamma) and ACTH. The activity of this receptor is mediated by G proteins which activate adenylate cyclase. Mediates melanogenesis, the production of eumelanin (black/brown) and phaeomelanin (red/yellow), via regulation of cAMP signaling in melanocytes. This is Melanocyte-stimulating hormone receptor (MC1R) from Saguinus oedipus (Cotton-top tamarin).